The primary structure comprises 414 residues: Multifunctional CCA protein (414 aa).

ATP is bound by residues Gly-8 and Arg-11. Gly-8 and Arg-11 together coordinate CTP. Mg(2+)-binding residues include Asp-21 and Asp-23. ATP is bound by residues Arg-91, Arg-143, and Arg-146. Positions 91, 143, and 146 each coordinate CTP. In terms of domain architecture, HD spans 232–333 (TGVHVMMVID…TRLVERCDAL (102 aa)).

The protein belongs to the tRNA nucleotidyltransferase/poly(A) polymerase family. Bacterial CCA-adding enzyme type 1 subfamily. In terms of assembly, monomer. Can also form homodimers and oligomers. Mg(2+) is required as a cofactor. Requires Ni(2+) as cofactor.

It carries out the reaction a tRNA precursor + 2 CTP + ATP = a tRNA with a 3' CCA end + 3 diphosphate. The catalysed reaction is a tRNA with a 3' CCA end + 2 CTP + ATP = a tRNA with a 3' CCACCA end + 3 diphosphate. In terms of biological role, catalyzes the addition and repair of the essential 3'-terminal CCA sequence in tRNAs without using a nucleic acid template. Adds these three nucleotides in the order of C, C, and A to the tRNA nucleotide-73, using CTP and ATP as substrates and producing inorganic pyrophosphate. tRNA 3'-terminal CCA addition is required both for tRNA processing and repair. Also involved in tRNA surveillance by mediating tandem CCA addition to generate a CCACCA at the 3' terminus of unstable tRNAs. While stable tRNAs receive only 3'-terminal CCA, unstable tRNAs are marked with CCACCA and rapidly degraded. This Cupriavidus metallidurans (strain ATCC 43123 / DSM 2839 / NBRC 102507 / CH34) (Ralstonia metallidurans) protein is Multifunctional CCA protein.